The sequence spans 413 residues: ATP-dependent RNA helicase RhlB (413 aa).

Residues 9–37 (QRFADLPLHPQILAALNDQNFEYCTPIQA) carry the Q motif motif. Residues 40–217 (LPLTLQGKDV…FEDMNDPEYI (178 aa)) enclose the Helicase ATP-binding domain. 53 to 60 (AQTGTGKT) provides a ligand contact to ATP. Residues 163-166 (DEAD) carry the DEAD box motif. Residues 241 to 388 (KMALLMTLLE…VSQYDPDSLI (148 aa)) enclose the Helicase C-terminal domain.

It belongs to the DEAD box helicase family. RhlB subfamily. In terms of assembly, component of the RNA degradosome, which is a multiprotein complex involved in RNA processing and mRNA degradation.

It is found in the cytoplasm. The enzyme catalyses ATP + H2O = ADP + phosphate + H(+). In terms of biological role, DEAD-box RNA helicase involved in RNA degradation. Has RNA-dependent ATPase activity and unwinds double-stranded RNA. The polypeptide is ATP-dependent RNA helicase RhlB (Actinobacillus succinogenes (strain ATCC 55618 / DSM 22257 / CCUG 43843 / 130Z)).